The primary structure comprises 503 residues: DEAD-box ATP-dependent RNA helicase CshA (503 aa).

The Q motif motif lies at 2 to 30 (QNFKELGISDKTVETLEAMGFKEPTPIQK). The Helicase ATP-binding domain occupies 33-203 (IPYTLEGKDI…QQFMKSPQIV (171 aa)). Residue 46 to 53 (AQTGTGKT) coordinates ATP. A DEAD box motif is present at residues 150–153 (DEAD). The Helicase C-terminal domain occupies 214–375 (QIDEYYTIVK…LRPPHRKEVL (162 aa)). The segment at 436-503 (EKPLARKNRQ…KGRTFADLQK (68 aa)) is disordered. The span at 466 to 480 (KRSKGNFNKKKGKKT) shows a compositional bias: basic residues. The segment covering 481-490 (DRRERQDKGR) has biased composition (basic and acidic residues).

The protein belongs to the DEAD box helicase family. CshA subfamily. As to quaternary structure, oligomerizes, may be a member of the RNA degradosome.

The protein localises to the cytoplasm. It carries out the reaction ATP + H2O = ADP + phosphate + H(+). Functionally, DEAD-box RNA helicase possibly involved in RNA degradation. Unwinds dsRNA in both 5'- and 3'-directions, has RNA-dependent ATPase activity. The polypeptide is DEAD-box ATP-dependent RNA helicase CshA (Staphylococcus haemolyticus (strain JCSC1435)).